The primary structure comprises 391 residues: RNA-binding motif protein, X chromosome (391 aa).

Met-1 carries the N-acetylmethionine; in Heterogeneous nuclear ribonucleoprotein G; alternate modification. An N-acetylvaline; in Heterogeneous nuclear ribonucleoprotein G, N-terminally processed modification is found at Val-2. The RRM domain occupies 8–86; it reads GKLFIGGLNT…KAIKVEQATK (79 aa). Lys-22 participates in a covalent cross-link: Glycyl lysine isopeptide (Lys-Gly) (interchain with G-Cter in SUMO2). Lys-30 carries the post-translational modification N6-acetyllysine. Residues 61 to 80 are compositionally biased toward basic and acidic residues; the sequence is DAKDAARDMNGKSLDGKAIK. A disordered region spans residues 61 to 391; it reads DAKDAARDMN…SDRGGGRSRY (331 aa). Glycyl lysine isopeptide (Lys-Gly) (interchain with G-Cter in SUMO2) cross-links involve residues Lys-80 and Lys-86. Ser-88 and Ser-91 each carry phosphoserine. The span at 109–120 shows a compositional bias: gly residues; the sequence is LRGGRGGSGGTR. Omega-N-methylarginine is present on residues Arg-125, Arg-144, and Arg-164. Pro residues predominate over residues 151-164; the sequence is RGPPPRSGGPPPKR. Position 165 is a phosphoserine (Ser-165). Arg-172 is modified (omega-N-methylarginine). Residue Ser-174 is modified to Phosphoserine. Positions 186 to 236 are necessary for the association to nascent RNAPII transcripts and nuclear localization; the sequence is GRDSYGGPPRREPLPSRRDVYLSPRDDGYSTKDSYSSRDYPSSRDTRDYAP. 2 stretches are compositionally biased toward basic and acidic residues: residues 194–215 and 241–274; these read PRREPLPSRRDVYLSPRDDGYS and YTYRDYGHSSSRDDYPSRGYSDRDGYGRDRDYSD. 5 positions are modified to phosphoserine: Ser-261, Ser-328, Ser-329, Ser-330, and Ser-332. Residues 323–337 show a composition bias toward low complexity; sequence SRDSYSSSRSDLYSS. The segment at 333–391 is necessary for RNA-binding; the sequence is DLYSSGRDRVGRQDRGLPPSMERGYPPPRDSYSSSSRGAPRGGGRGGSRSDRGGGRSRY. The segment covering 338–347 has biased composition (basic and acidic residues); the sequence is GRDRVGRQDR. Ser-352 carries the phosphoserine modification. Residues 362-371 show a composition bias toward low complexity; the sequence is DSYSSSSRGA. Residues 380-391 are compositionally biased toward basic and acidic residues; sequence SRSDRGGGRSRY.

In terms of assembly, homomultimer. Found in the supraspliceosome complex. Identified in the spliceosome C complex. Forms a complex with ILF2, ILF3, YLPM1, KHDRBS1, NCOA5 and PPP1CA. Interacts with CLK2, KHDRBS2, KHDRBS3, SAFB/SAFB1, TRA2B and YTHDC1. Interacts with ERAP1; the interaction is RNA-independent. Interacts with PPIA/CYPA. Post-translationally, O-glycosylated. In terms of processing, arg-185 is dimethylated, probably to asymmetric dimethylarginine.

The protein resides in the nucleus. Its function is as follows. RNA-binding protein that plays several role in the regulation of pre- and post-transcriptional processes. Implicated in tissue-specific regulation of gene transcription and alternative splicing of several pre-mRNAs. Binds to and stimulates transcription from the tumor suppressor TXNIP gene promoter; may thus be involved in tumor suppression. When associated with SAFB, binds to and stimulates transcription from the SREBF1 promoter. Associates with nascent mRNAs transcribed by RNA polymerase II. Component of the supraspliceosome complex that regulates pre-mRNA alternative splice site selection. Can either activate or suppress exon inclusion; acts additively with TRA2B to promote exon 7 inclusion of the survival motor neuron SMN. Represses the splicing of MAPT/Tau exon 10. Binds preferentially to single-stranded 5'-CC[A/C]-rich RNA sequence motifs localized in a single-stranded conformation; probably binds RNA as a homodimer. Binds non-specifically to pre-mRNAs. Also plays a role in the cytoplasmic TNFR1 trafficking pathways; promotes both the IL-1-beta-mediated inducible proteolytic cleavage of TNFR1 ectodomains and the release of TNFR1 exosome-like vesicles to the extracellular compartment. The protein is RNA-binding motif protein, X chromosome (RBMX) of Macaca fascicularis (Crab-eating macaque).